The primary structure comprises 154 residues: Transcriptional repressor NrdR (154 aa).

Residues 3–34 (CPFCGNENTRVIDTRAAEDGFAIKRRRECENC) fold into a zinc finger. The ATP-cone domain maps to 49–139 (LIVVKKDGSK…VYRQFKDVNS (91 aa)).

Belongs to the NrdR family. Zn(2+) serves as cofactor.

Negatively regulates transcription of bacterial ribonucleotide reductase nrd genes and operons by binding to NrdR-boxes. This is Transcriptional repressor NrdR from Carboxydothermus hydrogenoformans (strain ATCC BAA-161 / DSM 6008 / Z-2901).